We begin with the raw amino-acid sequence, 157 residues long: Ribonuclease H (157 aa).

The region spanning 1–146 (MPELFAYTDG…ADALAREGMA (146 aa)) is the RNase H type-1 domain. Mg(2+)-binding residues include aspartate 9, glutamate 52, aspartate 74, and aspartate 138.

It belongs to the RNase H family. As to quaternary structure, monomer. The cofactor is Mg(2+).

Its subcellular location is the cytoplasm. It carries out the reaction Endonucleolytic cleavage to 5'-phosphomonoester.. In terms of biological role, endonuclease that specifically degrades the RNA of RNA-DNA hybrids. The chain is Ribonuclease H from Dinoroseobacter shibae (strain DSM 16493 / NCIMB 14021 / DFL 12).